Reading from the N-terminus, the 87-residue chain is Exodeoxyribonuclease 7 small subunit (87 aa).

The protein belongs to the XseB family. In terms of assembly, heterooligomer composed of large and small subunits.

The protein localises to the cytoplasm. The enzyme catalyses Exonucleolytic cleavage in either 5'- to 3'- or 3'- to 5'-direction to yield nucleoside 5'-phosphates.. In terms of biological role, bidirectionally degrades single-stranded DNA into large acid-insoluble oligonucleotides, which are then degraded further into small acid-soluble oligonucleotides. The sequence is that of Exodeoxyribonuclease 7 small subunit from Halorhodospira halophila (strain DSM 244 / SL1) (Ectothiorhodospira halophila (strain DSM 244 / SL1)).